The following is a 423-amino-acid chain: D-tagatose-1,6-bisphosphate aldolase subunit GatZ (423 aa).

This sequence belongs to the GatZ/KbaZ family. GatZ subfamily. As to quaternary structure, forms a complex with GatY.

It participates in carbohydrate metabolism; D-tagatose 6-phosphate degradation; D-glyceraldehyde 3-phosphate and glycerone phosphate from D-tagatose 6-phosphate: step 2/2. In terms of biological role, component of the tagatose-1,6-bisphosphate aldolase GatYZ that is required for full activity and stability of the Y subunit. Could have a chaperone-like function for the proper and stable folding of GatY. When expressed alone, GatZ does not show any aldolase activity. Is involved in the catabolism of galactitol. The sequence is that of D-tagatose-1,6-bisphosphate aldolase subunit GatZ from Salmonella typhimurium (strain LT2 / SGSC1412 / ATCC 700720).